The following is a 174-amino-acid chain: Methylated protein MJ0556 (174 aa).

2 consecutive CBS domains span residues 28-87 (MISG…YLNV) and 91-156 (MLKN…IIKE).

Methylated at an undetermined residue between Ser-2 and Asp-26.

This Methanocaldococcus jannaschii (strain ATCC 43067 / DSM 2661 / JAL-1 / JCM 10045 / NBRC 100440) (Methanococcus jannaschii) protein is Methylated protein MJ0556.